The following is a 308-amino-acid chain: Ribosomal RNA small subunit methyltransferase H (308 aa).

S-adenosyl-L-methionine contacts are provided by residues glycine 36–histidine 38, aspartate 55, phenylalanine 82, aspartate 103, and glutamine 110.

The protein belongs to the methyltransferase superfamily. RsmH family.

The protein localises to the cytoplasm. The catalysed reaction is cytidine(1402) in 16S rRNA + S-adenosyl-L-methionine = N(4)-methylcytidine(1402) in 16S rRNA + S-adenosyl-L-homocysteine + H(+). Functionally, specifically methylates the N4 position of cytidine in position 1402 (C1402) of 16S rRNA. The sequence is that of Ribosomal RNA small subunit methyltransferase H from Helicobacter pylori (strain J99 / ATCC 700824) (Campylobacter pylori J99).